The chain runs to 134 residues: MDTSYPREDPRAPSSRKADAAAHTALSMGTPGPTPRDHMLWSVFSTMYLNLCCLGFLALVHSVKARDQKMAGNLEAARQYGSKAKCYNILAAMWTLVPPLLLLGLVVTGALHLSKLAKDSAAFFSTKFDEEDYN.

The span at 1-20 shows a compositional bias: basic and acidic residues; it reads MDTSYPREDPRAPSSRKADA. Positions 1 to 31 are disordered; it reads MDTSYPREDPRAPSSRKADAAAHTALSMGTP. Residues 1–39 lie on the Extracellular side of the membrane; that stretch reads MDTSYPREDPRAPSSRKADAAAHTALSMGTPGPTPRDHM. A helical transmembrane segment spans residues 40–60; sequence LWSVFSTMYLNLCCLGFLALV. 3 S-palmitoyl cysteine lipidation sites follow: Cys52, Cys53, and Cys86. At 61–88 the chain is on the cytoplasmic side; it reads HSVKARDQKMAGNLEAARQYGSKAKCYN. Residues 89–109 traverse the membrane as a helical segment; it reads ILAAMWTLVPPLLLLGLVVTG. Residues 110 to 134 are Extracellular-facing; the sequence is ALHLSKLAKDSAAFFSTKFDEEDYN.

It belongs to the CD225/Dispanin family. In terms of assembly, interacts with FKBP11. In terms of processing, palmitoylated. Detected in embryonic bone (at protein level). Highly expressed in osteoblasts of adults and embryos. Expressed in primitive hemopoietic cells.

Its subcellular location is the cell membrane. Required for normal bone mineralization. This is Interferon-induced transmembrane protein 5 (Ifitm5) from Mus musculus (Mouse).